The following is a 139-amino-acid chain: NADH-quinone oxidoreductase subunit A (139 aa).

Transmembrane regions (helical) follow at residues 11-31, 70-90, and 97-117; these read LWPL…MLAL, LIAI…AWAI, and WPGY…LVYL.

The protein belongs to the complex I subunit 3 family. As to quaternary structure, NDH-1 is composed of 14 different subunits. Subunits NuoA, H, J, K, L, M, N constitute the membrane sector of the complex.

It is found in the cell inner membrane. The catalysed reaction is a quinone + NADH + 5 H(+)(in) = a quinol + NAD(+) + 4 H(+)(out). Functionally, NDH-1 shuttles electrons from NADH, via FMN and iron-sulfur (Fe-S) centers, to quinones in the respiratory chain. The immediate electron acceptor for the enzyme in this species is believed to be ubiquinone. Couples the redox reaction to proton translocation (for every two electrons transferred, four hydrogen ions are translocated across the cytoplasmic membrane), and thus conserves the redox energy in a proton gradient. The polypeptide is NADH-quinone oxidoreductase subunit A (Methylococcus capsulatus (strain ATCC 33009 / NCIMB 11132 / Bath)).